The primary structure comprises 129 residues: MEHPSTNYTLEQQHEKLKNYVLIPKHLWSYIKYGTHVRYYTKQNVFRVGGFVLQNPYEAVVKNEVKTAIRLQNSFNTKAKGHVTWAVSYDDISKLYAKPDAIMLTIQENVEKALHALNQNVLTLASKIR.

This sequence belongs to the asfivirus C129R family.

It is found in the virion. Plays a role in the inhibition of type I interferon signaling pathway. Mechanistically, specifically interacts with 2',3'-cGAMP and cleaves it via its phosphodiesterase activity. In turn, prevents 2',3'-cGAMP interaction with host ER-resident STING1 leading to inhibition of downstream signaling pathway and type I interferon production. This is an uncharacterized protein from Ornithodoros (relapsing fever ticks).